The sequence spans 325 residues: tRNA(Ile)-lysidine synthase (325 aa).

Position 34 to 39 (34 to 39 (SGGADS)) interacts with ATP.

It belongs to the tRNA(Ile)-lysidine synthase family.

It localises to the cytoplasm. The catalysed reaction is cytidine(34) in tRNA(Ile2) + L-lysine + ATP = lysidine(34) in tRNA(Ile2) + AMP + diphosphate + H(+). Its function is as follows. Ligates lysine onto the cytidine present at position 34 of the AUA codon-specific tRNA(Ile) that contains the anticodon CAU, in an ATP-dependent manner. Cytidine is converted to lysidine, thus changing the amino acid specificity of the tRNA from methionine to isoleucine. In Rhodococcus erythropolis (strain PR4 / NBRC 100887), this protein is tRNA(Ile)-lysidine synthase.